The following is a 249-amino-acid chain: 1-(5-phosphoribosyl)-5-[(5-phosphoribosylamino)methylideneamino] imidazole-4-carboxamide isomerase (249 aa).

Catalysis depends on D10, which acts as the Proton acceptor. The active-site Proton donor is D131.

The protein belongs to the HisA/HisF family.

The protein localises to the cytoplasm. The catalysed reaction is 1-(5-phospho-beta-D-ribosyl)-5-[(5-phospho-beta-D-ribosylamino)methylideneamino]imidazole-4-carboxamide = 5-[(5-phospho-1-deoxy-D-ribulos-1-ylimino)methylamino]-1-(5-phospho-beta-D-ribosyl)imidazole-4-carboxamide. It participates in amino-acid biosynthesis; L-histidine biosynthesis; L-histidine from 5-phospho-alpha-D-ribose 1-diphosphate: step 4/9. The sequence is that of 1-(5-phosphoribosyl)-5-[(5-phosphoribosylamino)methylideneamino] imidazole-4-carboxamide isomerase from Brevibacillus brevis (strain 47 / JCM 6285 / NBRC 100599).